Consider the following 305-residue polypeptide: uncharacterized protein (305 aa).

This sequence belongs to the IIV-6 436R family.

This is an uncharacterized protein from Acheta domesticus (House cricket).